Here is a 182-residue protein sequence, read N- to C-terminus: Transcription termination/antitermination protein NusG (182 aa).

It belongs to the NusG family.

In terms of biological role, participates in transcription elongation, termination and antitermination. This chain is Transcription termination/antitermination protein NusG, found in Chlamydia muridarum (strain MoPn / Nigg).